A 412-amino-acid chain; its full sequence is ORC1-type DNA replication protein 2 (412 aa).

ATP is bound by residues 61-65 (VGKTA), Tyr207, and Arg219.

This sequence belongs to the CDC6/cdc18 family.

Involved in regulation of DNA replication. The sequence is that of ORC1-type DNA replication protein 2 (cdc6b) from Haloarcula marismortui (strain ATCC 43049 / DSM 3752 / JCM 8966 / VKM B-1809) (Halobacterium marismortui).